We begin with the raw amino-acid sequence, 159 residues long: Na(+)/H(+) antiporter subunit E1 (159 aa).

4 helical membrane-spanning segments follow: residues 1–21 (MAIQFVINLLVSVIWLLVTNS), 27–47 (FVLGFILGLFLVYLLHRVLPG), 60–80 (LIITFLTELIKANFGVLKIIL), and 101–121 (WQLVLLSNLITLTPGTVVLGI).

Belongs to the CPA3 antiporters (TC 2.A.63) subunit E family. May form a heterooligomeric complex that consists of seven subunits: mnhA1, mnhB1, mnhC1, mnhD1, mnhE1, mnhF1 and mnhG1.

It is found in the cell membrane. Functionally, mnh complex is a Na(+)/H(+) antiporter involved in Na(+) excretion. The sequence is that of Na(+)/H(+) antiporter subunit E1 (mnhE1) from Staphylococcus epidermidis (strain ATCC 35984 / DSM 28319 / BCRC 17069 / CCUG 31568 / BM 3577 / RP62A).